The chain runs to 479 residues: Sulfate adenylyltransferase subunit 1 (479 aa).

A tr-type G domain is found at 25–239 (KSLLRFLTCG…EVLETVDIQR (215 aa)). Residues 34–41 (GSVDDGKS) are G1. 34 to 41 (GSVDDGKS) contributes to the GTP binding site. Residues 92-96 (GITID) form a G2 region. The segment at 113–116 (DTPG) is G3. GTP contacts are provided by residues 113–117 (DTPGH) and 168–171 (NKMD). The tract at residues 168 to 171 (NKMD) is G4. The segment at 206-208 (SAL) is G5.

The protein belongs to the TRAFAC class translation factor GTPase superfamily. Classic translation factor GTPase family. CysN/NodQ subfamily. In terms of assembly, heterodimer composed of CysD, the smaller subunit, and CysN.

It carries out the reaction sulfate + ATP + H(+) = adenosine 5'-phosphosulfate + diphosphate. Its pathway is sulfur metabolism; hydrogen sulfide biosynthesis; sulfite from sulfate: step 1/3. Its function is as follows. With CysD forms the ATP sulfurylase (ATPS) that catalyzes the adenylation of sulfate producing adenosine 5'-phosphosulfate (APS) and diphosphate, the first enzymatic step in sulfur assimilation pathway. APS synthesis involves the formation of a high-energy phosphoric-sulfuric acid anhydride bond driven by GTP hydrolysis by CysN coupled to ATP hydrolysis by CysD. The protein is Sulfate adenylyltransferase subunit 1 of Salmonella typhi.